Consider the following 228-residue polypeptide: Lipoprotein-releasing system ATP-binding protein LolD (228 aa).

Positions 6–228 constitute an ABC transporter domain; sequence LRCKELSKSY…KNGILHKEQG (223 aa). 42–49 contacts ATP; that stretch reads GASGSGKS.

Belongs to the ABC transporter superfamily. Lipoprotein translocase (TC 3.A.1.125) family. In terms of assembly, the complex is composed of two ATP-binding proteins (LolD) and two transmembrane proteins (LolC and LolE).

It localises to the cell inner membrane. Functionally, part of the ABC transporter complex LolCDE involved in the translocation of mature outer membrane-directed lipoproteins, from the inner membrane to the periplasmic chaperone, LolA. Responsible for the formation of the LolA-lipoprotein complex in an ATP-dependent manner. The protein is Lipoprotein-releasing system ATP-binding protein LolD of Idiomarina loihiensis (strain ATCC BAA-735 / DSM 15497 / L2-TR).